A 336-amino-acid chain; its full sequence is Glycerol-3-phosphate dehydrogenase [NAD(P)+] (336 aa).

NADPH contacts are provided by Ser16, Tyr17, His37, and Lys111. The sn-glycerol 3-phosphate site is built by Lys111, Gly140, and Thr142. An NADPH-binding site is contributed by Ala144. The sn-glycerol 3-phosphate site is built by Lys196, Asp249, Ser259, Arg260, and Asn261. Lys196 acts as the Proton acceptor in catalysis. Residue Arg260 coordinates NADPH. NADPH contacts are provided by Val284 and Glu286.

It belongs to the NAD-dependent glycerol-3-phosphate dehydrogenase family.

The protein localises to the cytoplasm. The catalysed reaction is sn-glycerol 3-phosphate + NAD(+) = dihydroxyacetone phosphate + NADH + H(+). The enzyme catalyses sn-glycerol 3-phosphate + NADP(+) = dihydroxyacetone phosphate + NADPH + H(+). Its pathway is membrane lipid metabolism; glycerophospholipid metabolism. Its function is as follows. Catalyzes the reduction of the glycolytic intermediate dihydroxyacetone phosphate (DHAP) to sn-glycerol 3-phosphate (G3P), the key precursor for phospholipid synthesis. The chain is Glycerol-3-phosphate dehydrogenase [NAD(P)+] from Haemophilus ducreyi (strain 35000HP / ATCC 700724).